The sequence spans 87 residues: MVINSFISSISKEEKKGSVEFQVFCFTDKIRKLTSHLELHKKDFLSQRGMRKILGKRQRMLAYLSNKNKVRYKKLIGQLNIREPKTR.

Belongs to the universal ribosomal protein uS15 family. Part of the 30S ribosomal subunit.

The protein resides in the plastid. It localises to the chloroplast. This is Small ribosomal subunit protein uS15c (rps15) from Amborella trichopoda.